Consider the following 461-residue polypeptide: Ribitol-5-phosphate transferase FKTN (461 aa).

Over 1–7 (MSRINKN) the chain is Cytoplasmic. The tract at residues 6–27 (KNVVLALLTLTSSAFLLFQLYY) is required and sufficient for interaction with POMGNT1. Residues 8-28 (VVLALLTLTSSAFLLFQLYYY) form a helical; Signal-anchor for type II membrane protein membrane-spanning segment. Over 29 to 461 (KHYLSARNGP…SEWDEVIQLY (433 aa)) the chain is Lumenal. The N-linked (GlcNAc...) asparagine glycan is linked to Asn92.

Belongs to the LicD transferase family. As to quaternary structure, forms a complex composed of FKTN/fukutin, FKRP and RXYLT1/TMEM5. Interacts (via transmembrane domain) with POMGNT1; the interaction is direct and is required for normal POMGNT1 location in Golgi membranes. As to expression, expressed in the retina, with highest levels found in the inner segments of photoreceptors and the outer plexiform layer (at protein level). Expressed at lower levels in the inner and outer nuclear layers, the inner plexiform layers, and the ganglion cell layers of the retina (at protein level). Expressed in the heart, brain, spleen, lung, liver, skeletal muscle, kidney and testis.

The protein localises to the golgi apparatus membrane. Its subcellular location is the cytoplasm. It is found in the nucleus. It localises to the endoplasmic reticulum. The enzyme catalyses 3-O-[beta-D-GalNAc-(1-&gt;3)-beta-D-GlcNAc-(1-&gt;4)-(O-6-P-alpha-D-Man)]-Thr-[protein] + CDP-L-ribitol = 3-O-[Rib-ol-P-3-beta-D-GalNAc-(1-&gt;3)-beta-D-GlcNAc-(1-&gt;4)-(O-6-P-alpha-D-Man)]-Thr-[protein] + CMP + H(+). The protein operates within protein modification; protein glycosylation. Functionally, catalyzes the transfer of CDP-ribitol to the distal N-acetylgalactosamine of the phosphorylated O-mannosyl trisaccharide (N-acetylgalactosamine-beta-3-N-acetylglucosamine-beta-4-(phosphate-6-)mannose), a carbohydrate structure present in alpha-dystroglycan (DAG1). This constitutes the first step in the formation of the ribitol 5-phosphate tandem repeat which links the phosphorylated O-mannosyl trisaccharide to the ligand binding moiety composed of repeats of 3-xylosyl-alpha-1,3-glucuronic acid-beta-1. Required for normal location of POMGNT1 in Golgi membranes, and for normal POMGNT1 activity. May interact with and reinforce a large complex encompassing the outside and inside of muscle membranes. Could be involved in brain development. This Mus musculus (Mouse) protein is Ribitol-5-phosphate transferase FKTN.